The primary structure comprises 282 residues: Probable septum site-determining protein MinC (282 aa).

A disordered region spans residues 108 to 127 (AAARSADEESANAAAAAPAA). Low complexity predominate over residues 118-127 (ANAAAAAPAA).

It belongs to the MinC family. In terms of assembly, interacts with MinD and FtsZ.

Functionally, cell division inhibitor that blocks the formation of polar Z ring septums. Rapidly oscillates between the poles of the cell to destabilize FtsZ filaments that have formed before they mature into polar Z rings. Prevents FtsZ polymerization. The sequence is that of Probable septum site-determining protein MinC from Paraburkholderia xenovorans (strain LB400).